The following is a 130-amino-acid chain: ATP synthase epsilon chain (130 aa).

Belongs to the ATPase epsilon chain family. In terms of assembly, F-type ATPases have 2 components, CF(1) - the catalytic core - and CF(0) - the membrane proton channel. CF(1) has five subunits: alpha(3), beta(3), gamma(1), delta(1), epsilon(1). CF(0) has three main subunits: a, b and c.

The protein localises to the cell membrane. Produces ATP from ADP in the presence of a proton gradient across the membrane. The protein is ATP synthase epsilon chain (atpC) of Mycoplasmoides gallisepticum (strain R(low / passage 15 / clone 2)) (Mycoplasma gallisepticum).